A 7388-amino-acid chain; its full sequence is Microtubule-actin cross-linking factor 1, isoforms 1/2/3/4/5 (7388 aa).

Residues 1–47 (MSSSDEETLSERSCRSERSCRSERSYRSERSGSLSPCPPGDTLPWNL) are disordered. Residues 1 to 295 (MSSSDEETLS…VITYVSSIYD (295 aa)) form an actin-binding region. A Phosphoserine modification is found at serine 4. The segment covering 9–30 (LSERSCRSERSCRSERSYRSER) has biased composition (basic and acidic residues). A phosphoserine mark is found at serine 35 and serine 57. 2 Calponin-homology (CH) domains span residues 78–181 (RVQK…LHFQ) and 194–298 (MSAK…DAFP). 2 LRR repeats span residues 148–171 (QRQV…LTLG) and 240–264 (LVDM…VAER). Serine 280 carries the post-translational modification Phosphoserine. 2 LRR repeats span residues 377-399 (LYKL…YHPN) and 441-464 (LNCE…LESG). Residue serine 814 is modified to Phosphoserine. The region spanning 868 to 925 (KNTISVKAVCDYRQIEITICKNDECVLEDNSQRTKWKVISPTGNEAMVPSVCFLIPPP) is the SH3 domain. The LRR 5 repeat unit spans residues 1050 to 1073 (ISELKNIRLRLEEYEQRVVKRIQS). A Phosphoserine modification is found at serine 1122. 3 LRR repeats span residues 1128 to 1154 (VPTL…VYLN), 1187 to 1210 (LADL…VKDK), and 1257 to 1282 (HRVI…DYRA). Serine 1367 and serine 1376 each carry phosphoserine. Plectin repeat units follow at residues 1577-1621 (LVLL…RELQ), 1654-1696 (LKIL…VLES), 1769-1809 (RLLE…CAIL), 1811-1848 (RQLQ…VILE), and 1855-1886 (GLLW…KILS). Phosphoserine occurs at positions 2006 and 2051. Residues 2051–2085 (SQNKEYPDREDCTTEKGKKTTVETEDSSVENPEQD) are disordered. The span at 2055–2072 (EYPDREDCTTEKGKKTTV) shows a compositional bias: basic and acidic residues. Serine 2077 is subject to Phosphoserine. Plectin repeat units follow at residues 2290-2332 (LNVL…KLME), 2367-2410 (NVLM…LERQ), 2411-2437 (VVTG…GLVD), 2501-2543 (RLLT…LKRV), 2581-2612 (EVQA…LTNE), and 2686-2730 (LKVL…ASHQ). Disordered regions lie at residues 3013–3034 (EHDS…GKEA) and 3104–3174 (SEPF…NECK). Residues 3115–3124 (EGLHYQESDG) show a composition bias toward basic and acidic residues. Residue serine 3122 is modified to Phosphoserine. The segment covering 3129–3158 (TGPSQISKTDKSFQGTTRQETNYQDSWVTS) has biased composition (polar residues). LRR repeat units follow at residues 3239–3262 (LTGE…SIED) and 3264–3283 (VTQR…LFKG). Over residues 3321–3332 (EKTPQEKLRESP) the composition is skewed to basic and acidic residues. Residues 3321 to 3350 (EKTPQEKLRESPGSEQTPFMTAPEGKGNGG) form a disordered region. Position 3331 is a phosphoserine (serine 3331). 2 LRR repeats span residues 3646 to 3669 (QQDL…IQNR) and 3696 to 3720 (LTAL…TRVA). Spectrin repeat units lie at residues 3883–3957 (ELQK…NSFK) and 4000–4108 (QYHQ…SLLQ). Serine 3927 is modified (phosphoserine). An LRR 13 repeat occupies 3936 to 3958 (KGDLRFVTISGQKVLDMENSFKE). LRR repeat units follow at residues 4125-4150 (LQSI…VIQE) and 4261-4287 (IQEL…ELSS). One copy of the Spectrin 3 repeat lies at 4466–4574 (RMEEVHKEAN…TVARQRQLEE (109 aa)). Serine 4495, serine 4496, and serine 4521 each carry phosphoserine. 3 LRR repeats span residues 4511–4534 (KAFL…LAGL), 4601–4624 (GVLG…QFML), and 4769–4792 (KKRL…RINR). 2 Spectrin repeats span residues 4800–4904 (TQQF…SRLK) and 4909–5012 (KAQK…SLEE). A phosphoserine mark is found at serine 4836 and serine 4962. LRR repeat units lie at residues 5051-5076 (NKNL…YLRN), 5172-5194 (NKIH…MLEE), and 5281-5304 (KEQV…LIQS). Spectrin repeat units lie at residues 5236–5341 (EDFY…QLQE), 5348–5450 (KFQD…QLED), and 5455–5557 (AKQF…LRTL). Residue threonine 5435 is modified to Phosphothreonine. A disordered region spans residues 5583-5603 (EELATSGGQSPTGEQIPQFQQ). A compositionally biased stretch (polar residues) spans 5588–5603 (SGGQSPTGEQIPQFQQ). LRR repeat units lie at residues 5695–5719 (MALG…AFSI) and 5804–5828 (AQLP…QLRE). 9 Spectrin repeats span residues 5783–5885 (NQFW…ALDE), 6005–6110 (LAEK…KLED), 6115–6219 (AVQY…HKLE), 6225–6328 (LGQF…QQLQ), 6333–6439 (QAQG…KLEE), 6443–6547 (LATE…RSLD), 6552–6658 (RAKQ…KLEE), 6665–6766 (QFMD…RLEQ), and 6771–6874 (AEVF…QRLE). Phosphoserine is present on residues serine 5808 and serine 6032. The residue at position 6210 (lysine 6210) is an N6-acetyllysine. One copy of the LRR 24 repeat lies at 6496 to 6519 (RDQIIELDQTGNQLKFLSQKQDVV). The tract at residues 6951 to 6981 (PTHAPFIEKSRSGGRKSLSQPTPPPMPILSQ) is disordered. A Phosphoserine modification is found at serine 6967. EF-hand domains follow at residues 7041–7076 (HKKS…SKFP) and 7077–7112 (TTKL…NKDA). 10 residues coordinate Ca(2+): aspartate 7054, aspartate 7056, aspartate 7058, lysine 7060, glutamate 7065, aspartate 7090, aspartate 7092, aspartate 7094, tyrosine 7096, and glutamate 7101. The 73-residue stretch at 7117–7189 (TDADKIEDEV…EFLVKNDPCR (73 aa)) folds into the GAR domain. The tract at residues 7117-7388 (TDADKIEDEV…ASPRTPGPKR (272 aa)) is C-terminal tail. A disordered region spans residues 7205 to 7388 (PEGASQGMTP…ASPRTPGPKR (184 aa)). Residues 7225–7259 (SSRAASPTRSSSSASQSNHSCTSMPSSPATPASGT) are compositionally biased toward low complexity. The residue at position 7254 (threonine 7254) is a Phosphothreonine. Positions 7275–7299 (TFHSSRTSLAGDTSNSSSPASTGAK) are enriched in polar residues. Phosphoserine is present on residues serine 7279 and serine 7292. The segment covering 7310 to 7324 (SRPGSRAGSRAGSRA) has biased composition (low complexity). Residues 7313–7328 (GSRAGSRAGSRASSRR) form a 4 X 4 AA tandem repeats of [GS]-S-R-[AR] region. Phosphoserine occurs at positions 7330 and 7333. Residues 7339–7361 (ETQSACSDTSESSAAGGQGNSRR) show a composition bias toward polar residues.

It belongs to the plakin or cytolinker family. In terms of assembly, isoform 2: Interacts with MAPRE1, CLASP1, CLASP2, AXIN1 and LRP6. Isoform 2: Found in a complex composed of MACF1, APC, AXIN1, CTNNB1 and GSK3B. Isoform 2: Interacts with GOLGA4. Isoform 2: Interacts with CAMSAP3. Post-translationally, phosphorylated on serine residues in the C-terminal tail by GSK3B. Phosphorylation inhibits microtubule-binding and this plays a critical role in bulge stem cell migration and skin wound repair. Wnt-signaling can repress phosphorylation. In terms of tissue distribution, isoform 2: Ubiquitously expressed. Isoform 1: Expressed in cell lines NCI-H460, A-549 and HaCaT. Isoform 4: Expressed in heart, lung, pituitary and placenta, not found in brain, kidney, liver, pancreas or skeletal muscle.

The protein localises to the cytoplasm. Its subcellular location is the cytoskeleton. It is found in the golgi apparatus. The protein resides in the cell membrane. It localises to the cell projection. The protein localises to the ruffle membrane. F-actin-binding protein which plays a role in cross-linking actin to other cytoskeletal proteins and also binds to microtubules. Plays an important role in ERBB2-dependent stabilization of microtubules at the cell cortex. Acts as a positive regulator of Wnt receptor signaling pathway and is involved in the translocation of AXIN1 and its associated complex (composed of APC, CTNNB1 and GSK3B) from the cytoplasm to the cell membrane. Has actin-regulated ATPase activity and is essential for controlling focal adhesions (FAs) assembly and dynamics. Interaction with CAMSAP3 at the minus ends of non-centrosomal microtubules tethers microtubules minus-ends to actin filaments, regulating focal adhesion size and cell migration. May play role in delivery of transport vesicles containing GPI-linked proteins from the trans-Golgi network through its interaction with GOLGA4. Plays a key role in wound healing and epidermal cell migration. Required for efficient upward migration of bulge cells in response to wounding and this function is primarily rooted in its ability to coordinate microtubule dynamics and polarize hair follicle stem cells. As a regulator of actin and microtubule arrangement and stabilization, it plays an essential role in neurite outgrowth, branching and spine formation during brain development. The polypeptide is Microtubule-actin cross-linking factor 1, isoforms 1/2/3/4/5 (Homo sapiens (Human)).